The chain runs to 396 residues: NADH-quinone oxidoreductase subunit D (396 aa).

Belongs to the complex I 49 kDa subunit family. As to quaternary structure, NDH-1 is composed of 14 different subunits. Subunits NuoB, C, D, E, F, and G constitute the peripheral sector of the complex.

The protein localises to the cell inner membrane. The catalysed reaction is a quinone + NADH + 5 H(+)(in) = a quinol + NAD(+) + 4 H(+)(out). NDH-1 shuttles electrons from NADH, via FMN and iron-sulfur (Fe-S) centers, to quinones in the respiratory chain. The immediate electron acceptor for the enzyme in this species is believed to be ubiquinone. Couples the redox reaction to proton translocation (for every two electrons transferred, four hydrogen ions are translocated across the cytoplasmic membrane), and thus conserves the redox energy in a proton gradient. The protein is NADH-quinone oxidoreductase subunit D of Brucella suis biovar 1 (strain 1330).